We begin with the raw amino-acid sequence, 137 residues long: ATP synthase epsilon chain (137 aa).

The protein belongs to the ATPase epsilon chain family. F-type ATPases have 2 components, CF(1) - the catalytic core - and CF(0) - the membrane proton channel. CF(1) has five subunits: alpha(3), beta(3), gamma(1), delta(1), epsilon(1). CF(0) has three main subunits: a, b and c.

Its subcellular location is the cell membrane. Produces ATP from ADP in the presence of a proton gradient across the membrane. The protein is ATP synthase epsilon chain of Streptococcus agalactiae serotype III (strain NEM316).